The primary structure comprises 115 residues: CRISPR-associated endoribonuclease Cas2 (115 aa).

Position 22 (Asp22) interacts with Mg(2+).

It belongs to the CRISPR-associated endoribonuclease Cas2 protein family. Homodimer, forms a heterotetramer with a Cas1 homodimer. Mg(2+) serves as cofactor.

CRISPR (clustered regularly interspaced short palindromic repeat), is an adaptive immune system that provides protection against mobile genetic elements (viruses, transposable elements and conjugative plasmids). CRISPR clusters contain sequences complementary to antecedent mobile elements and target invading nucleic acids. CRISPR clusters are transcribed and processed into CRISPR RNA (crRNA). Functions as a ssRNA-specific endoribonuclease. Involved in the integration of spacer DNA into the CRISPR cassette. The chain is CRISPR-associated endoribonuclease Cas2 from Flavobacterium psychrophilum (strain ATCC 49511 / DSM 21280 / CIP 103535 / JIP02/86).